Reading from the N-terminus, the 383-residue chain is Teichoic acid glycerol-phosphate primase (383 aa).

It belongs to the CDP-glycerol glycerophosphotransferase family.

The protein localises to the cell membrane. The catalysed reaction is N-acetyl-beta-D-mannosaminyl-(1-&gt;4)-N-acetyl-alpha-D-glucosaminyl di-trans,octa-cis-undecaprenyl diphosphate + CDP-glycerol = 4-O-[(2R)-glycerylphospho]-N-acetyl-beta-D-mannosaminyl-(1-&gt;4)-N-acetyl-alpha-D-glucosaminyl di-trans,octa-cis-undecaprenyl diphosphate + CMP + H(+). The protein operates within cell wall biogenesis; poly(ribitol phosphate) teichoic acid biosynthesis. Catalyzes the addition of a single glycerol phosphate residue to the prenoldiphosphate-linked disaccharide. This chain is Teichoic acid glycerol-phosphate primase (tarB), found in Bacillus spizizenii (strain ATCC 23059 / NRRL B-14472 / W23) (Bacillus subtilis subsp. spizizenii).